Consider the following 468-residue polypeptide: Putative BTB/POZ domain and WD-repeat protein R154 (468 aa).

In terms of domain architecture, BTB spans 14-85 (SDLQLIVEDS…FYGIDDKLPE (72 aa)). WD repeat units follow at residues 194 to 233 (HHSENITSLCYDNNNKRIIYGDLKGTIYAYDFFSNKIIFN), 354 to 398 (DEIG…LVKS), and 401 to 440 (LFDVPIISMTYSPNGDQLIVANCDREVRILNSDNYEIIYT).

Belongs to the mimivirus BTB/WD family.

This Acanthamoeba polyphaga (Amoeba) protein is Putative BTB/POZ domain and WD-repeat protein R154.